We begin with the raw amino-acid sequence, 678 residues long: Protein KHNYN (678 aa).

Ser-10 is modified (phosphoserine). 2 disordered regions span residues 222 to 251 and 347 to 407; these read QGVR…ARGD and LHNG…ARGG. The segment covering 355-367 has biased composition (pro residues); it reads PRVPSPPPAPEPP. At Ser-359 the chain carries Phosphoserine. Residues 370-388 are compositionally biased toward basic and acidic residues; sequence CGDRGDCGDRGDVGDRGDK. One can recognise an RNase NYN domain in the interval 437-589; the sequence is LRHIVIDGSN…LGRNGPTLDE (153 aa). A disordered region spans residues 595-633; it reads ARTQGSSKAQHPSRGFAEHGKQQQGREEEKGSGGIRKTR. Basic and acidic residues predominate over residues 610 to 633; sequence FAEHGKQQQGREEEKGSGGIRKTR.

This sequence belongs to the N4BP1 family.

This Homo sapiens (Human) protein is Protein KHNYN (KHNYN).